Reading from the N-terminus, the 425-residue chain is WD repeat-containing protein JIP5 (425 aa).

WD repeat units lie at residues 9 to 48 (QLDSDLFAQAIHPEEPIVAVGLASGHVQTYRLPPGASDDS), 71 to 110 (RHKGSCRTLAFSVDGSSLYSAGTDGIVKVADTTTGRVTAK), 117 to 158 (LANG…AKSA), 219 to 262 (ELLS…DQDE), and 321 to 358 (LRQEGVIGLGFDVTGRMVSGGGKKLNIWGEKTWQDVPE). Positions 354 to 425 (QDVPEDDEDE…HGILHFSGLA (72 aa)) are disordered. 2 stretches are compositionally biased toward acidic residues: residues 356 to 368 (VPEDDEDEQEEEA) and 378 to 396 (SDEDEDSDEDMEESSEDDE). A compositionally biased stretch (basic residues) spans 399–414 (QKRKKRRKGKGGKQAK).

The protein belongs to the WD repeat WDR55 family.

It is found in the nucleus. The protein resides in the nucleolus. This Phaeosphaeria nodorum (strain SN15 / ATCC MYA-4574 / FGSC 10173) (Glume blotch fungus) protein is WD repeat-containing protein JIP5 (JIP5).